We begin with the raw amino-acid sequence, 461 residues long: L-seryl-tRNA(Sec) selenium transferase (461 aa).

N6-(pyridoxal phosphate)lysine is present on K294.

The protein belongs to the SelA family. Pyridoxal 5'-phosphate is required as a cofactor.

It is found in the cytoplasm. The catalysed reaction is L-seryl-tRNA(Sec) + selenophosphate + H(+) = L-selenocysteinyl-tRNA(Sec) + phosphate. It participates in aminoacyl-tRNA biosynthesis; selenocysteinyl-tRNA(Sec) biosynthesis; selenocysteinyl-tRNA(Sec) from L-seryl-tRNA(Sec) (bacterial route): step 1/1. Converts seryl-tRNA(Sec) to selenocysteinyl-tRNA(Sec) required for selenoprotein biosynthesis. This chain is L-seryl-tRNA(Sec) selenium transferase, found in Haemophilus influenzae (strain ATCC 51907 / DSM 11121 / KW20 / Rd).